Consider the following 570-residue polypeptide: Chaperonin GroEL 1 (570 aa).

Residues 42-45 (TLGP), K63, 99-103 (DGTTT), G427, and D507 contribute to the ATP site. The segment at 537–570 (EDEDDDDGGGGGGGGMPAGGAGGMGGMGGMGGMM) is disordered. The span at 545 to 570 (GGGGGGGMPAGGAGGMGGMGGMGGMM) shows a compositional bias: gly residues.

It belongs to the chaperonin (HSP60) family. As to quaternary structure, forms a cylinder of 14 subunits composed of two heptameric rings stacked back-to-back. Interacts with the co-chaperonin GroES.

Its subcellular location is the cytoplasm. It carries out the reaction ATP + H2O + a folded polypeptide = ADP + phosphate + an unfolded polypeptide.. Its function is as follows. Together with its co-chaperonin GroES, plays an essential role in assisting protein folding. The GroEL-GroES system forms a nano-cage that allows encapsulation of the non-native substrate proteins and provides a physical environment optimized to promote and accelerate protein folding. The protein is Chaperonin GroEL 1 of Salinibacter ruber (strain DSM 13855 / M31).